The following is a 153-amino-acid chain: 3-hydroxyacyl-[acyl-carrier-protein] dehydratase FabZ (153 aa).

Residue H54 is part of the active site.

The protein belongs to the thioester dehydratase family. FabZ subfamily.

It is found in the cytoplasm. It catalyses the reaction a (3R)-hydroxyacyl-[ACP] = a (2E)-enoyl-[ACP] + H2O. Its function is as follows. Involved in unsaturated fatty acids biosynthesis. Catalyzes the dehydration of short chain beta-hydroxyacyl-ACPs and long chain saturated and unsaturated beta-hydroxyacyl-ACPs. In Shewanella frigidimarina (strain NCIMB 400), this protein is 3-hydroxyacyl-[acyl-carrier-protein] dehydratase FabZ.